The sequence spans 943 residues: Glycine dehydrogenase (decarboxylating) (943 aa).

K695 carries the N6-(pyridoxal phosphate)lysine modification.

It belongs to the GcvP family. The glycine cleavage system is composed of four proteins: P, T, L and H. The cofactor is pyridoxal 5'-phosphate.

The catalysed reaction is N(6)-[(R)-lipoyl]-L-lysyl-[glycine-cleavage complex H protein] + glycine + H(+) = N(6)-[(R)-S(8)-aminomethyldihydrolipoyl]-L-lysyl-[glycine-cleavage complex H protein] + CO2. Its function is as follows. The glycine cleavage system catalyzes the degradation of glycine. The P protein binds the alpha-amino group of glycine through its pyridoxal phosphate cofactor; CO(2) is released and the remaining methylamine moiety is then transferred to the lipoamide cofactor of the H protein. This chain is Glycine dehydrogenase (decarboxylating), found in Jannaschia sp. (strain CCS1).